An 83-amino-acid chain; its full sequence is Large ribosomal subunit protein eL14 (83 aa).

This sequence belongs to the eukaryotic ribosomal protein eL14 family. Part of the 50S ribosomal subunit.

The chain is Large ribosomal subunit protein eL14 from Thermococcus kodakarensis (strain ATCC BAA-918 / JCM 12380 / KOD1) (Pyrococcus kodakaraensis (strain KOD1)).